The sequence spans 412 residues: [Pyruvate dehydrogenase (acetyl-transferring)] kinase isozyme 4, mitochondrial (412 aa).

Residues 138 to 368 enclose the Histidine kinase domain; that stretch reads ILEYKDTCTV…DAIIYLKALS (231 aa). ATP-binding positions include 254–261, D293, 312–313, and 329–334; these read ELFKNAMR, ST, and GFGYGL.

This sequence belongs to the PDK/BCKDK protein kinase family. Homodimer. Interacts with the pyruvate dehydrogenase complex subunit DLAT, and is part of the multimeric pyruvate dehydrogenase complex that contains multiple copies of pyruvate dehydrogenase (E1), dihydrolipoamide acetyltransferase (DLAT, E2) and lipoamide dehydrogenase (DLD, E3).

The protein localises to the mitochondrion matrix. It carries out the reaction L-seryl-[pyruvate dehydrogenase E1 alpha subunit] + ATP = O-phospho-L-seryl-[pyruvate dehydrogenase E1 alpha subunit] + ADP + H(+). Functionally, kinase that plays a key role in regulation of glucose and fatty acid metabolism and homeostasis via phosphorylation of the pyruvate dehydrogenase subunits PDHA1 and PDHA2. This inhibits pyruvate dehydrogenase activity, and thereby regulates metabolite flux through the tricarboxylic acid cycle, down-regulates aerobic respiration and inhibits the formation of acetyl-coenzyme A from pyruvate. Inhibition of pyruvate dehydrogenase decreases glucose utilization and increases fat metabolism in response to prolonged fasting and starvation. Plays an important role in maintaining normal blood glucose levels under starvation, and is involved in the insulin signaling cascade. Via its regulation of pyruvate dehydrogenase activity, plays an important role in maintaining normal blood pH and in preventing the accumulation of ketone bodies under starvation. In the fed state, mediates cellular responses to glucose levels and to a high-fat diet. Regulates both fatty acid oxidation and de novo fatty acid biosynthesis. Plays a role in the generation of reactive oxygen species. Protects detached epithelial cells against anoikis. Plays a role in cell proliferation via its role in regulating carbohydrate and fatty acid metabolism. The chain is [Pyruvate dehydrogenase (acetyl-transferring)] kinase isozyme 4, mitochondrial (Pdk4) from Mus musculus (Mouse).